Here is a 312-residue protein sequence, read N- to C-terminus: Ribosomal protein L11 methyltransferase (312 aa).

4 residues coordinate S-adenosyl-L-methionine: Thr162, Gly183, Asp205, and Asn248.

It belongs to the methyltransferase superfamily. PrmA family.

Its subcellular location is the cytoplasm. It carries out the reaction L-lysyl-[protein] + 3 S-adenosyl-L-methionine = N(6),N(6),N(6)-trimethyl-L-lysyl-[protein] + 3 S-adenosyl-L-homocysteine + 3 H(+). Methylates ribosomal protein L11. The protein is Ribosomal protein L11 methyltransferase of Geobacillus thermodenitrificans (strain NG80-2).